The following is a 481-amino-acid chain: Glutamyl-tRNA(Gln) amidotransferase subunit A (481 aa).

Catalysis depends on charge relay system residues lysine 75 and serine 150. Residue serine 174 is the Acyl-ester intermediate of the active site.

This sequence belongs to the amidase family. GatA subfamily. As to quaternary structure, heterotrimer of A, B and C subunits.

The catalysed reaction is L-glutamyl-tRNA(Gln) + L-glutamine + ATP + H2O = L-glutaminyl-tRNA(Gln) + L-glutamate + ADP + phosphate + H(+). In terms of biological role, allows the formation of correctly charged Gln-tRNA(Gln) through the transamidation of misacylated Glu-tRNA(Gln) in organisms which lack glutaminyl-tRNA synthetase. The reaction takes place in the presence of glutamine and ATP through an activated gamma-phospho-Glu-tRNA(Gln). The sequence is that of Glutamyl-tRNA(Gln) amidotransferase subunit A from Macrococcus caseolyticus (strain JCSC5402) (Macrococcoides caseolyticum).